We begin with the raw amino-acid sequence, 273 residues long: Cytoplasmic phosphatidylinositol transfer protein 1 (273 aa).

Residues 244 to 273 (QAETNEKIHNTSGGANAAANAKEANDGDID) are disordered.

The protein belongs to the PtdIns transfer protein family. PI transfer class IIB subfamily.

Phosphatidylinositol transfer proteins mediate the monomeric transport of lipids by shielding a lipid from the aqueous environment and binding the lipid in a hydrophobic cavity. This Drosophila melanogaster (Fruit fly) protein is Cytoplasmic phosphatidylinositol transfer protein 1 (rdgBbeta).